A 400-amino-acid polypeptide reads, in one-letter code: Putative F-box protein At5g41510 (400 aa).

The region spanning 2-47 (ATMISNLPRDLIEEIFSRVPLTSMKAVRLTCKSWNNLSKSESFTKV) is the F-box domain.

The sequence is that of Putative F-box protein At5g41510 from Arabidopsis thaliana (Mouse-ear cress).